Consider the following 582-residue polypeptide: Glutamine--tRNA ligase (582 aa).

Residues 50 to 60 carry the 'HIGH' region motif; it reads PEPNGYLHIGH. ATP is bound by residues 51-53 and 57-63; these read EPN and HIGHAKS. The L-glutamine site is built by Asp83 and Tyr235. ATP is bound by residues Thr254 and 289–290; that span reads RL. Residues 296 to 300 carry the 'KMSKS' region motif; that stretch reads ITSKR.

It belongs to the class-I aminoacyl-tRNA synthetase family. Monomer.

The protein resides in the cytoplasm. It catalyses the reaction tRNA(Gln) + L-glutamine + ATP = L-glutaminyl-tRNA(Gln) + AMP + diphosphate. The chain is Glutamine--tRNA ligase from Cupriavidus metallidurans (strain ATCC 43123 / DSM 2839 / NBRC 102507 / CH34) (Ralstonia metallidurans).